The following is a 117-amino-acid chain: Large ribosomal subunit protein bL20c (117 aa).

It belongs to the bacterial ribosomal protein bL20 family.

It is found in the plastid. The protein localises to the chloroplast. Binds directly to 23S ribosomal RNA and is necessary for the in vitro assembly process of the 50S ribosomal subunit. It is not involved in the protein synthesizing functions of that subunit. This is Large ribosomal subunit protein bL20c from Gossypium hirsutum (Upland cotton).